A 1414-amino-acid polypeptide reads, in one-letter code: DNA-directed RNA polymerase subunit beta' (1414 aa).

The Zn(2+) site is built by cysteine 70, cysteine 72, cysteine 85, and cysteine 88. Residues aspartate 460, aspartate 462, and aspartate 464 each coordinate Mg(2+). Residues cysteine 819, cysteine 893, cysteine 900, and cysteine 903 each coordinate Zn(2+). Residues 1391 to 1414 (AEEAFDFGTPSAPAEEPQQHPAAE) form a disordered region. A compositionally biased stretch (low complexity) spans 1400–1414 (PSAPAEEPQQHPAAE).

This sequence belongs to the RNA polymerase beta' chain family. The RNAP catalytic core consists of 2 alpha, 1 beta, 1 beta' and 1 omega subunit. When a sigma factor is associated with the core the holoenzyme is formed, which can initiate transcription. Mg(2+) serves as cofactor. It depends on Zn(2+) as a cofactor.

It catalyses the reaction RNA(n) + a ribonucleoside 5'-triphosphate = RNA(n+1) + diphosphate. Its function is as follows. DNA-dependent RNA polymerase catalyzes the transcription of DNA into RNA using the four ribonucleoside triphosphates as substrates. The sequence is that of DNA-directed RNA polymerase subunit beta' from Burkholderia lata (strain ATCC 17760 / DSM 23089 / LMG 22485 / NCIMB 9086 / R18194 / 383).